A 191-amino-acid chain; its full sequence is Insulin-like peptide INSL6 (191 aa).

A signal peptide spans 1–22 (MKQLCCSCLLWLGLLLTPFSRE). 3 disulfide bridges follow: C33–C172, C45–C185, and C171–C176. Residues 53–161 (FEMEEQSPMT…RSLFWGNHSQ (109 aa)) constitute a propeptide, connecting peptide.

The protein belongs to the insulin family.

The protein localises to the secreted. May have a role in sperm development and fertilization. In Mus musculus (Mouse), this protein is Insulin-like peptide INSL6 (Insl6).